Consider the following 521-residue polypeptide: Chromaffin granule amine transporter (521 aa).

The Cytoplasmic segment spans residues methionine 1–lysine 21. A helical membrane pass occupies residues leucine 22–valine 42. The Lumenal, vesicle segment spans residues proline 43–arginine 135. 3 N-linked (GlcNAc...) asparagine glycosylation sites follow: asparagine 58, asparagine 87, and asparagine 104. The chain crosses the membrane as a helical span at residues isoleucine 136–glycine 155. Residues proline 156–histidine 164 are Cytoplasmic-facing. A helical membrane pass occupies residues isoleucine 165–glycine 185. Residues threonine 186–arginine 194 are Lumenal, vesicle-facing. The chain crosses the membrane as a helical span at residues threonine 195–valine 215. Over tyrosine 216–arginine 224 the chain is Cytoplasmic. Residues alanine 225 to methionine 247 form a helical membrane-spanning segment. The Lumenal, vesicle segment spans residues tyrosine 248–lysine 253. A helical transmembrane segment spans residues serine 254–tryptophan 276. Residues proline 277–aspartate 296 lie on the Cytoplasmic side of the membrane. Residues proline 297–leucine 316 form a helical membrane-spanning segment. Residues glutamate 317–glutamate 332 lie on the Lumenal, vesicle side of the membrane. Residues tryptophan 333–alanine 357 traverse the membrane as a helical segment. Topologically, residues asparagine 358 to arginine 362 are cytoplasmic. The chain crosses the membrane as a helical span at residues tryptophan 363–alanine 383. Over histidine 384–alanine 394 the chain is Lumenal, vesicle. Residues glycine 395–valine 415 form a helical membrane-spanning segment. Topologically, residues aspartate 416–histidine 419 are cytoplasmic. The chain crosses the membrane as a helical span at residues threonine 420–isoleucine 440. The Lumenal, vesicle segment spans residues glycine 441 to glycine 445. Residues glycine 446–isoleucine 467 form a helical membrane-spanning segment. Over tyrosine 468–glutamate 521 the chain is Cytoplasmic.

It belongs to the major facilitator superfamily. Vesicular transporter family. Adrenal gland.

Its subcellular location is the cytoplasmic vesicle. It is found in the secretory vesicle membrane. The protein localises to the secretory vesicle. The protein resides in the synaptic vesicle membrane. The catalysed reaction is serotonin(in) + 2 H(+)(out) = serotonin(out) + 2 H(+)(in). It carries out the reaction (R)-noradrenaline(in) + 2 H(+)(out) = (R)-noradrenaline(out) + 2 H(+)(in). It catalyses the reaction dopamine(in) + 2 H(+)(out) = dopamine(out) + 2 H(+)(in). Strongly inhibited by reserpine, ketanserin and methamphetamine. Also inhibited weakly by tetrabenazine. Its function is as follows. Electrogenic antiporter that exchanges one cationic monoamine with two intravesicular protons across the membrane of secretory and synaptic vesicles. Uses the electrochemical proton gradient established by the V-type proton-pump ATPase to accumulate high concentrations of monoamines inside the vesicles prior to their release via exocytosis. Transports catecholamines and indolamines with higher affinity for serotonin. Regulates the transvesicular monoaminergic gradient that determines the quantal size. Mediates presynaptic monoaminergic vesicle transport in the amygdala and prefrontal brain regions related with emotion processing in response to environmental stimuli. This is Chromaffin granule amine transporter (Slc18a1) from Rattus norvegicus (Rat).